A 507-amino-acid polypeptide reads, in one-letter code: Protein DETOXIFICATION 41 (507 aa).

The Cytoplasmic segment spans residues 1-62 (MSSTETYEPL…KLLWTLSGAS (62 aa)). A helical transmembrane segment spans residues 63 to 83 (IVVSVLNYMLSFVTVMFTGHL). Over 84-92 (GSLQLAGAS) the chain is Vacuolar. A helical membrane pass occupies residues 93 to 113 (IATVGIQGLAYGIMLGMASAV). Residues 114-137 (QTVCGQAYGARQYSSMGIICQRAM) are Cytoplasmic-facing. Residues 138-158 (VLHLAAAVFLTFLYWYSGPIL) form a helical membrane-spanning segment. At 159-170 (KTMGQSVAIAHE) the chain is on the vacuolar side. Residues 171–191 (GQIFARGMIPQIYAFALACPM) form a helical membrane-spanning segment. Residues 192 to 202 (QRFLQAQNIVN) are Cytoplasmic-facing. A helical transmembrane segment spans residues 203 to 223 (PLAYMSLGVFLLHTLLTWLVT). Asn-224 is a topological domain (vacuolar). Residues 225–245 (VLDFGLLGAALILSFSWWLLV) traverse the membrane as a helical segment. Topologically, residues 246-283 (AVNGMYILMSPNCKETWTGFSTRAFRGIWPYFKLTVAS) are cytoplasmic. The chain crosses the membrane as a helical span at residues 284-304 (AVMLCLEIWYNQGLVIISGLL). Residues 305-312 (SNPTISLD) are Vacuolar-facing. The chain crosses the membrane as a helical span at residues 313-333 (AISICMYYLNWDMQFMLGLSA). Residues 334–355 (AISVRVSNELGAGNPRVAMLSV) lie on the Cytoplasmic side of the membrane. Residues 356–376 (VVVNITTVLISSVLCVIVLVF) traverse the membrane as a helical segment. At 377 to 389 (RVGLSKAFTSDAE) the chain is on the vacuolar side. The chain crosses the membrane as a helical span at residues 390-410 (VIAAVSDLFPLLAVSIFLNGI). Residues 411–425 (QPILSGVAIGSGWQA) lie on the Cytoplasmic side of the membrane. Residues 426–446 (VVAYVNLVTYYVIGLPIGCVL) traverse the membrane as a helical segment. Topologically, residues 447 to 453 (GFKTSLG) are vacuolar. Residues 454–474 (VAGIWWGMIAGVILQTLTLIV) traverse the membrane as a helical segment. At 475-507 (LTLKTNWTSEVENAAQRVKTSATENQEMANAGV) the chain is on the cytoplasmic side.

Belongs to the multi antimicrobial extrusion (MATE) (TC 2.A.66.1) family. Expressed in reproductive tissues, from buds to siliques. Restricted to the endothelium layer of the ovule and the seed coat.

The protein localises to the vacuole membrane. Its pathway is secondary metabolite biosynthesis; flavonoid biosynthesis. Its function is as follows. Acts as a flavonoid/H(+)-antiporter that control the vacuolar sequestration of flavonoids in the seed coat endothelium. Could transport the anthocyanin cyanidin-3-O-glucoside and epicatechin 3'-O-glucoside in vitro. The chain is Protein DETOXIFICATION 41 from Arabidopsis thaliana (Mouse-ear cress).